We begin with the raw amino-acid sequence, 247 residues long: MNVLLCSINTLKGLYDISGVEVGQHLYWKIGGFQVHAQVLITSWVVIAILLGSSIIAVRNPQTIPTDGQNFFEYVLEFIRDVSRTQIGEEYGPWVPFIGTMFLFIFVSNWSGALLPWKIIQLPHGELAAPTNDINTTVALALLTSVAYFYAGLTKKGLGYFGKYIQPTPILLPINILEDFTKPLSLSFRLFGNILADELVVVVLVSLVPLVVPIPVMFLGLFTSGIQALIFATLAAAYIGESMEGHH.

5 helical membrane-spanning segments follow: residues 38–58, 95–115, 134–154, 199–219, and 220–240; these read QVLITSWVVIAILLGSSIIAV, VPFIGTMFLFIFVSNWSGALL, INTTVALALLTSVAYFYAGLT, LVVVVLVSLVPLVVPIPVMFL, and GLFTSGIQALIFATLAAAYIG.

Belongs to the ATPase A chain family. In terms of assembly, F-type ATPases have 2 components, CF(1) - the catalytic core - and CF(0) - the membrane proton channel. CF(1) has five subunits: alpha(3), beta(3), gamma(1), delta(1), epsilon(1). CF(0) has four main subunits: a, b, b' and c.

It localises to the plastid. It is found in the chloroplast thylakoid membrane. Functionally, key component of the proton channel; it plays a direct role in the translocation of protons across the membrane. The sequence is that of ATP synthase subunit a, chloroplastic from Morus indica (Mulberry).